The sequence spans 398 residues: Carbamoyl phosphate synthase small chain (398 aa).

The CPSase stretch occupies residues 1–207; that stretch reads MIQTISSSRP…KGYGTNNVHN (207 aa). 3 residues coordinate L-glutamine: S60, G257, and G259. Positions 209–397 constitute a Glutamine amidotransferase type-1 domain; it reads HIVAIDYGIK…CDLIMNHKKI (189 aa). The active-site Nucleophile is the C286. L287, Q290, N328, G330, and F331 together coordinate L-glutamine. Active-site residues include H370 and E372.

It belongs to the CarA family. As to quaternary structure, composed of two chains; the small (or glutamine) chain promotes the hydrolysis of glutamine to ammonia, which is used by the large (or ammonia) chain to synthesize carbamoyl phosphate. Tetramer of heterodimers (alpha,beta)4.

It catalyses the reaction hydrogencarbonate + L-glutamine + 2 ATP + H2O = carbamoyl phosphate + L-glutamate + 2 ADP + phosphate + 2 H(+). The enzyme catalyses L-glutamine + H2O = L-glutamate + NH4(+). Its pathway is amino-acid biosynthesis; L-arginine biosynthesis; carbamoyl phosphate from bicarbonate: step 1/1. It participates in pyrimidine metabolism; UMP biosynthesis via de novo pathway; (S)-dihydroorotate from bicarbonate: step 1/3. In terms of biological role, small subunit of the glutamine-dependent carbamoyl phosphate synthetase (CPSase). CPSase catalyzes the formation of carbamoyl phosphate from the ammonia moiety of glutamine, carbonate, and phosphate donated by ATP, constituting the first step of 2 biosynthetic pathways, one leading to arginine and/or urea and the other to pyrimidine nucleotides. The small subunit (glutamine amidotransferase) binds and cleaves glutamine to supply the large subunit with the substrate ammonia. The chain is Carbamoyl phosphate synthase small chain from Bartonella tribocorum (strain CIP 105476 / IBS 506).